A 293-amino-acid chain; its full sequence is DOMON domain-containing protein FRRS1L (293 aa).

Positions Met1–Ala28 are cleaved as a signal peptide. The tract at residues Ser29–Asp60 is disordered. Over residues Ala46–Asp60 the composition is skewed to basic and acidic residues. The region spanning Cys119–Ala234 is the DOMON domain. A helical transmembrane segment spans residues Thr271–Gly291.

In terms of assembly, component of the outer core of AMPAR complex. AMPAR complex consists of an inner core made of 4 pore-forming GluA/GRIA proteins (GRIA1, GRIA2, GRIA3 and GRIA4) and 4 major auxiliary subunits arranged in a twofold symmetry. One of the two pairs of distinct binding sites is occupied either by CNIH2, CNIH3 or CACNG2, CACNG3. The other harbors CACNG2, CACNG3, CACNG4, CACNG8 or GSG1L. This inner core of AMPAR complex is complemented by outer core constituents binding directly to the GluA/GRIA proteins at sites distinct from the interaction sites of the inner core constituents. Outer core constituents include at least PRRT1, PRRT2, CKAMP44/SHISA9, FRRS1L and NRN1. The proteins of the inner and outer core serve as a platform for other, more peripherally associated AMPAR constituents. Alone or in combination, these auxiliary subunits control the gating and pharmacology of the AMPAR complex and profoundly impact their biogenesis and protein processing. As to expression, expressed in the brain (at protein level). In embryos expression is evident in the ventral forebrain, but a lower level is seen in the remainder of the embryos. In the adult brain, expressed in the cortex, cerebellum, hippocampus and basal ganglia.

It localises to the cell membrane. The protein localises to the synapse. In terms of biological role, important modulator of glutamate signaling pathway. The chain is DOMON domain-containing protein FRRS1L (Frrs1l) from Mus musculus (Mouse).